Here is a 299-residue protein sequence, read N- to C-terminus: Ribosomal protein uL3 glutamine methyltransferase (299 aa).

The protein belongs to the protein N5-glutamine methyltransferase family. PrmB subfamily.

It carries out the reaction L-glutaminyl-[ribosomal protein uL3] + S-adenosyl-L-methionine = N(5)-methyl-L-glutaminyl-[ribosomal protein uL3] + S-adenosyl-L-homocysteine + H(+). Its function is as follows. Methylates large ribosomal subunit protein uL3 on a specific glutamine residue. The chain is Ribosomal protein uL3 glutamine methyltransferase from Neisseria gonorrhoeae (strain ATCC 700825 / FA 1090).